The chain runs to 168 residues: Cell division inhibitor SulA (168 aa).

Residues 105-111 (ALQTGNY) form a ftsZ binding region.

The protein belongs to the SulA family. As to quaternary structure, interacts with FtsZ. Is rapidly cleaved and degraded by the Lon protease once DNA damage is repaired.

Functionally, component of the SOS system and an inhibitor of cell division. Accumulation of SulA causes rapid cessation of cell division and the appearance of long, non-septate filaments. In the presence of GTP, binds a polymerization-competent form of FtsZ in a 1:1 ratio, thus inhibiting FtsZ polymerization and therefore preventing it from participating in the assembly of the Z ring. This mechanism prevents the premature segregation of damaged DNA to daughter cells during cell division. This Erwinia pyrifoliae (strain DSM 12163 / CIP 106111 / Ep16/96) protein is Cell division inhibitor SulA.